A 398-amino-acid chain; its full sequence is Acetate kinase (398 aa).

Asparagine 7 contacts Mg(2+). Lysine 14 provides a ligand contact to ATP. Position 92 (arginine 92) interacts with substrate. Aspartate 149 acts as the Proton donor/acceptor in catalysis. Residues 209 to 213 (HLGNG), 284 to 286 (DFR), and 332 to 336 (GVGEN) contribute to the ATP site. Glutamate 385 lines the Mg(2+) pocket.

This sequence belongs to the acetokinase family. As to quaternary structure, homodimer. Requires Mg(2+) as cofactor. The cofactor is Mn(2+).

It localises to the cytoplasm. The catalysed reaction is acetate + ATP = acetyl phosphate + ADP. The protein operates within metabolic intermediate biosynthesis; acetyl-CoA biosynthesis; acetyl-CoA from acetate: step 1/2. In terms of biological role, catalyzes the formation of acetyl phosphate from acetate and ATP. Can also catalyze the reverse reaction. The protein is Acetate kinase of Clostridioides difficile (strain 630) (Peptoclostridium difficile).